The following is a 355-amino-acid chain: Probable butyrate kinase (355 aa).

Belongs to the acetokinase family.

The protein localises to the cytoplasm. The catalysed reaction is butanoate + ATP = butanoyl phosphate + ADP. The polypeptide is Probable butyrate kinase (Listeria monocytogenes serotype 4b (strain CLIP80459)).